The sequence spans 254 residues: Leucyl/phenylalanyl-tRNA--protein transferase (254 aa).

Residues 1-10 are compositionally biased toward pro residues; that stretch reads MSSQPPPLPW. The segment at 1–28 is disordered; that stretch reads MSSQPPPLPWLDPNQDFPPTSQAWDENS.

The protein belongs to the L/F-transferase family.

The protein resides in the cytoplasm. The catalysed reaction is N-terminal L-lysyl-[protein] + L-leucyl-tRNA(Leu) = N-terminal L-leucyl-L-lysyl-[protein] + tRNA(Leu) + H(+). The enzyme catalyses N-terminal L-arginyl-[protein] + L-leucyl-tRNA(Leu) = N-terminal L-leucyl-L-arginyl-[protein] + tRNA(Leu) + H(+). It catalyses the reaction L-phenylalanyl-tRNA(Phe) + an N-terminal L-alpha-aminoacyl-[protein] = an N-terminal L-phenylalanyl-L-alpha-aminoacyl-[protein] + tRNA(Phe). In terms of biological role, functions in the N-end rule pathway of protein degradation where it conjugates Leu, Phe and, less efficiently, Met from aminoacyl-tRNAs to the N-termini of proteins containing an N-terminal arginine or lysine. The sequence is that of Leucyl/phenylalanyl-tRNA--protein transferase from Albidiferax ferrireducens (strain ATCC BAA-621 / DSM 15236 / T118) (Rhodoferax ferrireducens).